Here is a 233-residue protein sequence, read N- to C-terminus: Ribitol-5-phosphate cytidylyltransferase (233 aa).

Residues 7-10 (LAGG) and 80-86 (GADRNET) each bind CTP.

Belongs to the IspD/TarI cytidylyltransferase family. TarI subfamily.

The enzyme catalyses D-ribitol 5-phosphate + CTP + H(+) = CDP-L-ribitol + diphosphate. It functions in the pathway cell wall biogenesis; poly(ribitol phosphate) teichoic acid biosynthesis. Catalyzes the transfer of the cytidylyl group of CTP to D-ribitol 5-phosphate. The sequence is that of Ribitol-5-phosphate cytidylyltransferase from Lactiplantibacillus plantarum (strain ATCC BAA-793 / NCIMB 8826 / WCFS1) (Lactobacillus plantarum).